The sequence spans 146 residues: MORN repeat-containing protein 4 (146 aa).

4 MORN repeats span residues 16–38, 39–61, 62–84, and 85–107; these read YRGE…DGGT, YLGH…DGSR, YEGE…DNMT, and FEGE…DGSH.

Interacts with MYO3A.

It localises to the cytoplasm. The protein resides in the cell projection. The protein localises to the filopodium tip. It is found in the stereocilium. Its function is as follows. Plays a role in promoting axonal degeneration following neuronal injury by toxic insult or trauma. This is MORN repeat-containing protein 4 (Morn4) from Mus musculus (Mouse).